A 196-amino-acid polypeptide reads, in one-letter code: tRNA(Phe) 7-((3-amino-3-carboxypropyl)-4-demethylwyosine(37)-N(4))-methyltransferase 1 (196 aa).

This sequence belongs to the TYW3 family.

The catalysed reaction is 4-demethyl-7-[(3S)-3-amino-3-carboxypropyl]wyosine(37) in tRNA(Phe) + S-adenosyl-L-methionine = 7-[(3S)-3-amino-3-carboxypropyl]wyosine(37) in tRNA(Phe) + S-adenosyl-L-homocysteine + H(+). Its function is as follows. S-adenosyl-L-methionine-dependent methyltransferase that acts as a component of the wyosine derivatives biosynthesis pathway. Probably methylates N-4 position of wybutosine-86 to produce wybutosine-72. The chain is tRNA(Phe) 7-((3-amino-3-carboxypropyl)-4-demethylwyosine(37)-N(4))-methyltransferase 1 from Pyrococcus horikoshii (strain ATCC 700860 / DSM 12428 / JCM 9974 / NBRC 100139 / OT-3).